Reading from the N-terminus, the 459-residue chain is Type IV methyl-directed restriction enzyme EcoKMcrB subunit (459 aa).

GTP is bound by residues 201 to 208 (GPPGVGKT), 300 to 303 (DKRG), and 333 to 336 (NTAD).

Its function is as follows. Recognizes N4- and C5-methylcytosine (and 5-hydroxy-methylcytosines) produced by a broad range of DNA methylases and appears to act against 5-methylcytosine preceded by a purine residue. Binds to DNA containing methylated cytosines; also binds to GTP. Isoform 33 kDa is less active than isoform 51 kDa and may play a role in regulating the activity of isoform 51 kDa by competing with it in DNA and protein binding abilities. The polypeptide is Type IV methyl-directed restriction enzyme EcoKMcrB subunit (mcrB) (Escherichia coli (strain K12)).